The chain runs to 117 residues: Ribonuclease P protein component (117 aa).

Belongs to the RnpA family. Consists of a catalytic RNA component (M1 or rnpB) and a protein subunit.

It catalyses the reaction Endonucleolytic cleavage of RNA, removing 5'-extranucleotides from tRNA precursor.. Its function is as follows. RNaseP catalyzes the removal of the 5'-leader sequence from pre-tRNA to produce the mature 5'-terminus. It can also cleave other RNA substrates such as 4.5S RNA. The protein component plays an auxiliary but essential role in vivo by binding to the 5'-leader sequence and broadening the substrate specificity of the ribozyme. The polypeptide is Ribonuclease P protein component (Lactococcus lactis subsp. cremoris (strain MG1363)).